The chain runs to 421 residues: UDP-N-acetylglucosamine 1-carboxyvinyltransferase 1 (421 aa).

Position 22–23 (22–23) interacts with phosphoenolpyruvate; sequence KN. A UDP-N-acetyl-alpha-D-glucosamine-binding site is contributed by arginine 95. Catalysis depends on cysteine 119, which acts as the Proton donor. Cysteine 119 is modified (2-(S-cysteinyl)pyruvic acid O-phosphothioketal). UDP-N-acetyl-alpha-D-glucosamine is bound by residues 124–128, aspartate 308, and valine 330; that span reads RPIEQ.

Belongs to the EPSP synthase family. MurA subfamily.

The protein resides in the cytoplasm. The enzyme catalyses phosphoenolpyruvate + UDP-N-acetyl-alpha-D-glucosamine = UDP-N-acetyl-3-O-(1-carboxyvinyl)-alpha-D-glucosamine + phosphate. Its pathway is cell wall biogenesis; peptidoglycan biosynthesis. Cell wall formation. Adds enolpyruvyl to UDP-N-acetylglucosamine. The protein is UDP-N-acetylglucosamine 1-carboxyvinyltransferase 1 of Staphylococcus aureus (strain MW2).